The sequence spans 313 residues: Postacrosomal sheath WW domain-binding protein (313 aa).

The 80-residue stretch at 8 to 87 folds into the GRAM domain; that stretch reads TESRRGALIP…GLMSDCTIEQ (80 aa). A run of 12 repeats spans residues 179–185, 193–199, 207–213, 214–220, 221–227, 228–234, 235–241, 242–248, 249–255, 256–262, 263–269, and 270–276. The interval 179 to 276 is 12 X 7 AA tandem repeat of Y-G-X-P-P-X-G; the sequence is YGPPPPGYTV…PAGYGAPPAG (98 aa). Positions 183-186 match the PPxY motif 1 motif; the sequence is PPGY. The span at 254-264 shows a compositional bias: gly residues; sequence GGYGAPPGGYG. Positions 254 to 313 are disordered; it reads GGYGAPPGGYGAPPAGYGAPPAGNEALPPAYEAPSAGNTAASHRSMTAQQETSLPTTSSS. Residues 265-276 show a composition bias toward low complexity; the sequence is APPAGYGAPPAG. Residues 281–284 carry the PPxY motif 2 motif; that stretch reads PPAY. The segment covering 289-313 has biased composition (polar residues); the sequence is AGNTAASHRSMTAQQETSLPTTSSS.

As to expression, expressed in testis.

In terms of biological role, may play a role in meiotic resumption and pronuclear formation, mediated by a WW domain-signaling pathway during fertilization. This is Postacrosomal sheath WW domain-binding protein (WBP2NL) from Bos taurus (Bovine).